Consider the following 164-residue polypeptide: Nucleotide-binding protein EF_1165 (164 aa).

This sequence belongs to the YajQ family.

Nucleotide-binding protein. This Enterococcus faecalis (strain ATCC 700802 / V583) protein is Nucleotide-binding protein EF_1165.